Consider the following 388-residue polypeptide: Dual-specificity RNA methyltransferase RlmN (388 aa).

The Proton acceptor role is filled by Glu-109. In terms of domain architecture, Radical SAM core spans 115–354; it reads EDDRATLCVS…TIVRKTRGDD (240 aa). The cysteines at positions 122 and 359 are disulfide-linked. 3 residues coordinate [4Fe-4S] cluster: Cys-129, Cys-133, and Cys-136. Residues 183 to 184, Ser-215, 237 to 239, and Asn-316 each bind S-adenosyl-L-methionine; these read GE and SLH. Cys-359 (S-methylcysteine intermediate) is an active-site residue.

It belongs to the radical SAM superfamily. RlmN family. It depends on [4Fe-4S] cluster as a cofactor.

Its subcellular location is the cytoplasm. The catalysed reaction is adenosine(2503) in 23S rRNA + 2 reduced [2Fe-2S]-[ferredoxin] + 2 S-adenosyl-L-methionine = 2-methyladenosine(2503) in 23S rRNA + 5'-deoxyadenosine + L-methionine + 2 oxidized [2Fe-2S]-[ferredoxin] + S-adenosyl-L-homocysteine. It catalyses the reaction adenosine(37) in tRNA + 2 reduced [2Fe-2S]-[ferredoxin] + 2 S-adenosyl-L-methionine = 2-methyladenosine(37) in tRNA + 5'-deoxyadenosine + L-methionine + 2 oxidized [2Fe-2S]-[ferredoxin] + S-adenosyl-L-homocysteine. Its function is as follows. Specifically methylates position 2 of adenine 2503 in 23S rRNA and position 2 of adenine 37 in tRNAs. m2A2503 modification seems to play a crucial role in the proofreading step occurring at the peptidyl transferase center and thus would serve to optimize ribosomal fidelity. The protein is Dual-specificity RNA methyltransferase RlmN of Salmonella arizonae (strain ATCC BAA-731 / CDC346-86 / RSK2980).